A 271-amino-acid polypeptide reads, in one-letter code: Putative phosphoenolpyruvate synthase regulatory protein (271 aa).

G152–T159 serves as a coordination point for ADP.

The protein belongs to the pyruvate, phosphate/water dikinase regulatory protein family. PSRP subfamily.

The catalysed reaction is [pyruvate, water dikinase] + ADP = [pyruvate, water dikinase]-phosphate + AMP + H(+). It carries out the reaction [pyruvate, water dikinase]-phosphate + phosphate + H(+) = [pyruvate, water dikinase] + diphosphate. Bifunctional serine/threonine kinase and phosphorylase involved in the regulation of the phosphoenolpyruvate synthase (PEPS) by catalyzing its phosphorylation/dephosphorylation. This is Putative phosphoenolpyruvate synthase regulatory protein from Legionella pneumophila (strain Corby).